A 156-amino-acid polypeptide reads, in one-letter code: Perlucin-like protein (156 aa).

The first 22 residues, Met1–Gly22, serve as a signal peptide directing secretion. Intrachain disulfides connect Cys30–Cys41, Cys58–Cys156, and Cys131–Cys147. The region spanning Tyr37–Cys156 is the C-type lectin domain.

In terms of tissue distribution, component of the organic matrix of calcified shell layers like nacre and prisms.

The protein localises to the secreted. The polypeptide is Perlucin-like protein (Mytilus galloprovincialis (Mediterranean mussel)).